A 35-amino-acid polypeptide reads, in one-letter code: DAPASPLADIEKHAAEFQKTISEQFNSLVNSKNTQ.

In terms of assembly, equilibrium between a soluble monomer and a bound lipoprotein form. Apolipophorin-3 associates with lipophorin during lipid loading until each particle contains 9 or 14 molecules of apolipophorin-3. As to expression, hemolymph.

It localises to the secreted. Its function is as follows. Assists in the loading of diacylglycerol, generated from triacylglycerol stores in the fat body through the action of adipokinetic hormone, into lipophorin, the hemolymph lipoprotein. It increases the lipid carrying capacity of lipophorin by covering the expanding hydrophobic surface resulting from diacylglycerol uptake. It thus plays a critical role in the transport of lipids during flight in several species of insects. Has hemagglutinating activity towards rabbit erythrocytes. The polypeptide is Apolipophorin-3 (Heliothis virescens (Tobacco budworm moth)).